We begin with the raw amino-acid sequence, 705 residues long: Elongation factor G (705 aa).

Residues Glu-8–Leu-294 enclose the tr-type G domain. GTP contacts are provided by residues Ala-17–Thr-24, Asp-92–His-96, and Asn-146–Asp-149.

This sequence belongs to the TRAFAC class translation factor GTPase superfamily. Classic translation factor GTPase family. EF-G/EF-2 subfamily.

The protein localises to the cytoplasm. Functionally, catalyzes the GTP-dependent ribosomal translocation step during translation elongation. During this step, the ribosome changes from the pre-translocational (PRE) to the post-translocational (POST) state as the newly formed A-site-bound peptidyl-tRNA and P-site-bound deacylated tRNA move to the P and E sites, respectively. Catalyzes the coordinated movement of the two tRNA molecules, the mRNA and conformational changes in the ribosome. This Cereibacter sphaeroides (strain ATCC 17023 / DSM 158 / JCM 6121 / CCUG 31486 / LMG 2827 / NBRC 12203 / NCIMB 8253 / ATH 2.4.1.) (Rhodobacter sphaeroides) protein is Elongation factor G.